We begin with the raw amino-acid sequence, 479 residues long: Sodium-coupled neutral amino acid transporter 5 (479 aa).

The Cytoplasmic segment spans residues 1–58; sequence MAISCAVGMEMQEPKMNGTLSTGAAAGYRQEREGFLPTTHGPAPGRKPVQFLDFEGKT. The chain crosses the membrane as a helical span at residues 59–81; that stretch reads SFGMSVFNLSNAIMGSGILGLAY. Topologically, residues 82–97 are extracellular; the sequence is AMAHTGVIFFLALLLC. Residues 98–118 traverse the membrane as a helical segment; it reads IALLSSYSIHLLLTCASVVGI. At 119–135 the chain is on the cytoplasmic side; it reads RAYEQLGQRAFGPAGKV. Residues 136-156 traverse the membrane as a helical segment; it reads VVAIIICLHNVGAMSSYLFII. The Extracellular segment spans residues 157-176; the sequence is KSELPLVIGTFLHMDPEGDW. Residues 177 to 197 traverse the membrane as a helical segment; that stretch reads FLKGNLLIILVSLLIILPLAL. Topologically, residues 198–202 are cytoplasmic; sequence MKHLG. Residues 203-223 traverse the membrane as a helical segment; that stretch reads YLGYTSSLSLTCMLFFLISVI. Residues 224–264 are Extracellular-facing; it reads YKKFQLGCVVSHNDTVVESEPAPLQAFNSSCEAKLFTVDSQ. Cysteine 231 and cysteine 254 are disulfide-bonded. Asparagine 236 carries N-linked (GlcNAc...) asparagine glycosylation. A helical membrane pass occupies residues 265–285; that stretch reads MSYTVPIMAFAFVCHPEVLPI. Residues 286–302 lie on the Cytoplasmic side of the membrane; that stretch reads YTELCCPTQRRMQAVAN. The chain crosses the membrane as a helical span at residues 303–323; it reads MSIGAMFIMYGLTATFGYLTF. Residues 324–341 lie on the Extracellular side of the membrane; the sequence is YSTVKAEMLEMYTQEDLL. A helical transmembrane segment spans residues 342–362; the sequence is ILCVRLAVLLAVTLTVPVVLF. The Cytoplasmic portion of the chain corresponds to 363–383; sequence PIRRALQQLLFPSKAFSWPRH. A helical membrane pass occupies residues 384-404; it reads VAIALILLILVNILVICVPTI. The Extracellular portion of the chain corresponds to 405–406; that stretch reads RD. A helical transmembrane segment spans residues 407–427; it reads IFGFIGSTSAPSLIFILPSVF. Residues 428–446 lie on the Cytoplasmic side of the membrane; that stretch reads YLRIVPADMEPLFSWPKIQ. A helical transmembrane segment spans residues 447 to 467; it reads ALCFGVLGVLFMAISLGFMFA. The Extracellular segment spans residues 468–479; it reads NWATGQSRMSGH.

It belongs to the amino acid/polyamine transporter 2 family. As to expression, highly expressed in neocortex, hippocampus, striatum and spinal cord by astrocytes (at protein level). Expressed in brain, lung, stomach, kidney, spleen and testis. Expressed in the cerebral cortex between the second and third postnatal week, where expressed exclusively in glial cells from postnatal day 14 to adulthood (at protein level). Expressed in the cerebellum at post natal day 12 (P12). Expressed in liver. Expressed inside the cell body of the astrocytes.

It localises to the cell membrane. It carries out the reaction L-serine(out) + Na(+)(out) + H(+)(in) = L-serine(in) + Na(+)(in) + H(+)(out). The catalysed reaction is L-alanine(out) + Na(+)(out) + H(+)(in) = L-alanine(in) + Na(+)(in) + H(+)(out). The enzyme catalyses glycine(out) + Na(+)(out) + H(+)(in) = glycine(in) + Na(+)(in) + H(+)(out). It catalyses the reaction L-glutamine(out) + Na(+)(out) + H(+)(in) = L-glutamine(in) + Na(+)(in) + H(+)(out). It carries out the reaction L-asparagine(out) + Na(+)(out) + H(+)(in) = L-asparagine(in) + Na(+)(in) + H(+)(out). The catalysed reaction is L-histidine(out) + Na(+)(out) + H(+)(in) = L-histidine(in) + Na(+)(in) + H(+)(out). The enzyme catalyses L-cysteine(out) + Na(+)(out) + H(+)(in) = L-cysteine(in) + Na(+)(in) + H(+)(out). With respect to regulation, not inhibited by lithium. Partial allosteric regulation on ions sodium binding. Its function is as follows. Symporter that cotransports neutral amino acids and sodium ions, coupled to an H(+) antiporter activity. Releases L-glutamine and glycine from astroglial cells and may participate in the glutamate/GABA-glutamine cycle and the NMDA receptors activation. In addition contributes significantly to L-glutamine uptake in retina, namely in ganglion and Mueller cells and, therefore participates in the retinal glutamate-glutamine cycle. The transport activity is pH sensitive, Li(+) tolerant, bidirectional and associated with large uncoupled fluxes of protons. The transport is electroneutral coupled to the cotransport of 1 Na(+) and the antiport of 1 H(+). May have particular importance for modulation of net hepatic glutamine flux. This chain is Sodium-coupled neutral amino acid transporter 5, found in Rattus norvegicus (Rat).